Here is a 354-residue protein sequence, read N- to C-terminus: Replication-associated protein (354 aa).

The CRESS-DNA virus Rep endonuclease domain maps to L11–F114. The short motif at F18–Y21 is the RCR-1 element. Residues E52, H60, and H62 each coordinate a divalent metal cation. The short motif at H60–H62 is the RCR-2 element. The active-site For DNA cleavage activity is Y100. Positions Y100 to K103 match the RCR-3 motif. Position 104 (E104) interacts with a divalent metal cation. Residues S174–F186 form an oligomerization region. G228–S235 contributes to the ATP binding site. A transactivation region spans residues V251–P269. The Nuclear localization signal signature appears at K291–S302.

It belongs to the geminiviridae Rep protein family. As to quaternary structure, homooligomer. Rep binds to repeated DNA motifs (iterons). Forms the O-complex, which is a Rep-DNA complex involved in the initiation of RCR. Part of the C- and V-complexes which are RepA-Rep-DNA complexes involved in the c-sense and v-sense transcription. It depends on Mg(2+) as a cofactor. Requires Mn(2+) as cofactor.

It localises to the host nucleus. Essential for the replication of viral ssDNA. The closed circular ssDNA genome is first converted to a superhelical dsDNA. Rep binds a specific region at the genome origin of replication. It introduces an endonucleolytic nick within the conserved sequence 5'-TAATATTAC-3' in the intergenic region of the genome present in all geminiviruses, thereby initiating the rolling circle replication (RCR). Following cleavage, binds covalently to the 5'-phosphate of DNA as a tyrosyl ester. The cleavage gives rise to a free 3'-OH that serves as a primer for the cellular DNA polymerase. The polymerase synthesizes the (+) strand DNA by rolling circle mechanism. After one round of replication, a Rep-catalyzed nucleotidyl transfer reaction releases a circular single-stranded virus genome, thereby terminating the replication. Displays origin-specific DNA cleavage, nucleotidyl transferase, ATPase and helicase activities. Acts as an inhibitor of C-sense gene transcription. The protein is Replication-associated protein of Avena sativa (Oat).